The chain runs to 115 residues: Type 3 secretion system chaperone YscG (115 aa).

The protein belongs to the YscG family. In terms of assembly, component of the heterodimeric YscE-YscG chaperone. The YscE-YscG chaperone forms a stable ternary complex with YscF/SctF.

It localises to the cytoplasm. Functionally, chaperone of the type III secretion system (T3SS), also called injectisome, which is used to inject bacterial effector proteins into eukaryotic host cells. Along with YscE, prevents premature polymerization of the YscF/SctF needle protein within the cytoplasm. Required for Yop secretion. This chain is Type 3 secretion system chaperone YscG, found in Yersinia enterocolitica.